The primary structure comprises 351 residues: MFCFLGLRLLKYITFRTAYATIFAFLLALIFGPFIISRLKKLKLDQILRKDGPKHHLSEKMGIPTMGGVLIFFCVLVSLFFWIHFFNIYFLIVLFVMVSFACLGFTDDLLKIKRKNSDGLNPKFKIYGQILFSFISVVMLYYFGGEHVSILYFPFFKSLKLDLGILYIPFGMFVLISASNSFNLTDGLDGLAIGLSIVVIGALIIIAYLTSRVDFALYLNIPNVKGCEELVIFLGALLGGSFGFLWFNAYPAKIMMGDTGSLSIGAVLGMVALILKSEILFAILAGVFVVETLSVIIQVVVYKKTKKRVFKMAPLHHHFEELGWSEMQVVIRFWIIGLIFAILALSTIKIR.

10 consecutive transmembrane segments (helical) span residues 17–37 (TAYA…FIIS), 61–83 (MGIP…FFWI), 88–105 (IYFL…CLGF), 130–150 (ILFS…HVSI), 158–178 (SLKL…LISA), 190–210 (GLAI…AYLT), 230–250 (LVIF…FNAY), 254–274 (IMMG…VALI), 279–299 (ILFA…IIQV), and 328–348 (QVVI…LSTI).

It belongs to the glycosyltransferase 4 family. MraY subfamily. Requires Mg(2+) as cofactor.

It localises to the cell inner membrane. It carries out the reaction UDP-N-acetyl-alpha-D-muramoyl-L-alanyl-gamma-D-glutamyl-meso-2,6-diaminopimeloyl-D-alanyl-D-alanine + di-trans,octa-cis-undecaprenyl phosphate = di-trans,octa-cis-undecaprenyl diphospho-N-acetyl-alpha-D-muramoyl-L-alanyl-D-glutamyl-meso-2,6-diaminopimeloyl-D-alanyl-D-alanine + UMP. It functions in the pathway cell wall biogenesis; peptidoglycan biosynthesis. Functionally, catalyzes the initial step of the lipid cycle reactions in the biosynthesis of the cell wall peptidoglycan: transfers peptidoglycan precursor phospho-MurNAc-pentapeptide from UDP-MurNAc-pentapeptide onto the lipid carrier undecaprenyl phosphate, yielding undecaprenyl-pyrophosphoryl-MurNAc-pentapeptide, known as lipid I. The sequence is that of Phospho-N-acetylmuramoyl-pentapeptide-transferase from Borrelia recurrentis (strain A1).